The following is a 375-amino-acid chain: Actin (375 aa).

Belongs to the actin family.

Its subcellular location is the cytoplasm. The protein resides in the cytoskeleton. It catalyses the reaction ATP + H2O = ADP + phosphate + H(+). In terms of biological role, actins are highly conserved proteins that are involved in various types of cell motility and are ubiquitously expressed in all eukaryotic cells. This chain is Actin, found in Giardia intestinalis (Giardia lamblia).